Reading from the N-terminus, the 667-residue chain is Cysteine-rich receptor-like protein kinase 11 (667 aa).

Positions 1–24 (MKQRSLFSVLCFFFISFGVASVSA) are cleaved as a signal peptide. Gnk2-homologous domains are found at residues 25 to 129 (QTCT…NTSF) and 135 to 248 (LNPR…LYTY). Topologically, residues 25–292 (QTCTTDKGTF…SKGISAGVVV (268 aa)) are extracellular. N37, N54, N64, N106, N126, N150, and N254 each carry an N-linked (GlcNAc...) asparagine glycan. The span at 259-268 (SPPPEPPVTV) shows a compositional bias: pro residues. Residues 259 to 282 (SPPPEPPVTVPQPAGDQDNPTNND) form a disordered region. N281 carries an N-linked (GlcNAc...) asparagine glycan. The chain crosses the membrane as a helical span at residues 293 to 313 (AITVPTVIAILILLVLGFVLF). Residues 314–667 (RRRKSYQRTK…YTSKSSSFSS (354 aa)) lie on the Cytoplasmic side of the membrane. The 280-residue stretch at 350 to 629 (FSTSNKLGEG…IILMLTSNTI (280 aa)) folds into the Protein kinase domain. ATP contacts are provided by residues 356–364 (LGEGGFGAV) and K378. Y423 carries the post-translational modification Phosphotyrosine. D475 acts as the Proton acceptor in catalysis. At S479 the chain carries Phosphoserine. T515 is modified (phosphothreonine). Y523 carries the post-translational modification Phosphotyrosine.

Belongs to the protein kinase superfamily. Ser/Thr protein kinase family. CRK subfamily. In terms of tissue distribution, detected in root, stem, leaf and flower.

The protein localises to the membrane. It carries out the reaction L-seryl-[protein] + ATP = O-phospho-L-seryl-[protein] + ADP + H(+). The enzyme catalyses L-threonyl-[protein] + ATP = O-phospho-L-threonyl-[protein] + ADP + H(+). The protein is Cysteine-rich receptor-like protein kinase 11 (CRK11) of Arabidopsis thaliana (Mouse-ear cress).